A 60-amino-acid polypeptide reads, in one-letter code: Metallothionein (60 aa).

A beta region spans residues 1-28; sequence MDPCECSKGGTCNCGGSCTCTNCSCTTC. A divalent metal cation contacts are provided by C4, C6, C12, C14, C18, C20, C23, C25, C28, C32, C33, C35, C36, C40, C43, C47, C49, C54, C58, and C59. Positions 29–60 are alpha; it reads KKSCCPCCPSGCPKCASGCVCKGKTCDAACCQ.

This sequence belongs to the metallothionein superfamily. Type 1 family.

Metallothioneins have a high content of cysteine residues that bind various heavy metals. In Perca fluviatilis (European perch), this protein is Metallothionein (mt).